The chain runs to 128 residues: Small ribosomal subunit protein uS9 (128 aa).

This sequence belongs to the universal ribosomal protein uS9 family.

This is Small ribosomal subunit protein uS9 from Christiangramia forsetii (strain DSM 17595 / CGMCC 1.15422 / KT0803) (Gramella forsetii).